A 768-amino-acid chain; its full sequence is Ribonucleoside-diphosphate reductase large chain (768 aa).

Residues 7–8 and 13–19 each bind ATP; these read SK and EKLGIDL. GDP is bound by residues Thr-196 and Ser-211. A disulfide bridge links Cys-212 with Cys-437. DTTP-binding positions include 220 to 222, Lys-237, and Arg-250; that span reads DSI. Asn-420 is a GDP binding site. Asn-420 (proton acceptor) is an active-site residue. The active-site Cysteine radical intermediate is Cys-422. Residue Glu-424 participates in GDP binding. Catalysis depends on Glu-424, which acts as the Proton acceptor.

Belongs to the ribonucleoside diphosphate reductase large chain family. In terms of assembly, heterodimer of a large and a small subunit.

The enzyme catalyses a 2'-deoxyribonucleoside 5'-diphosphate + [thioredoxin]-disulfide + H2O = a ribonucleoside 5'-diphosphate + [thioredoxin]-dithiol. Its activity is regulated as follows. Under complex allosteric control mediated by deoxynucleoside triphosphates and ATP binding to separate specificity and activation sites on the large subunit. The type of nucleotide bound at the specificity site determines substrate preference. It seems probable that ATP makes the enzyme reduce CDP and UDP, dGTP favors ADP reduction and dTTP favors GDP reduction. Stimulated by ATP and inhibited by dATP binding to the activity site. Functionally, provides the precursors necessary for DNA synthesis. Catalyzes the biosynthesis of deoxyribonucleotides from the corresponding ribonucleotides. The protein is Ribonucleoside-diphosphate reductase large chain of Encephalitozoon cuniculi (strain GB-M1) (Microsporidian parasite).